The primary structure comprises 236 residues: GLIPR1-like protein 1 (236 aa).

A signal peptide spans 1–27 (MALKKKLNFLWTLVLYLIASRLPKAFG). In terms of domain architecture, SCP spans 46 to 178 (LNIHNELRRK…FSAGLFVCNY (133 aa)). An N-linked (GlcNAc...) asparagine glycan is attached at Asn126.

It belongs to the CRISP family. As to quaternary structure, part of a oolemmal binding multimeric complex (IZUMO1 complex) composed at least of IZUMO1 and GLIPR1L1; the complex assemblage is influenced by the maturation status of the male germ cell. Interacts with IZUMO1. N-glycosylated. N-glycosylation decreases during the transit in the caput. As to expression, expressed in testis (at protein level). Little or no expression in other tissues tested.

It is found in the cytoplasmic vesicle. It localises to the secretory vesicle. The protein localises to the acrosome. The protein resides in the cell membrane. Its subcellular location is the membrane raft. It is found in the secreted. In terms of biological role, required for optimal fertilization at the stage of sperm-oocyte fusion, plays a role in optimizing acrosome function, the translocation of IZUMO1 during the acrosome reaction and the fertilization process. Component of epididymosomes, one type of membranous microvesicules which mediate the transfer of lipids and proteins to spermatozoa plasma membrane during epididymal maturation. Also component of the CD9-positive microvesicules found in the cauda region. The polypeptide is GLIPR1-like protein 1 (Mus musculus (Mouse)).